Consider the following 596-residue polypeptide: Tripeptidyl-peptidase SED2 (596 aa).

The first 16 residues, 1-16 (MLVLKFVCLLASVAAA), serve as a signal peptide directing secretion. Residues 18–203 (PTSWSSHKVV…LEAMSEEEFS (186 aa)) constitute a propeptide, removed in mature form. The Peptidase S53 domain maps to 210–596 (LVTTACLREL…NFQALTKVLP (387 aa)). Residue Asn265 is glycosylated (N-linked (GlcNAc...) asparagine). Residues Glu286 and Asp290 each act as charge relay system in the active site. Asn403 carries N-linked (GlcNAc...) asparagine glycosylation. Ser501 functions as the Charge relay system in the catalytic mechanism. Residues Asp543 and Ile544 each contribute to the Ca(2+) site. The N-linked (GlcNAc...) asparagine glycan is linked to Asn572. Residues Gly576 and Asp578 each contribute to the Ca(2+) site.

Requires Ca(2+) as cofactor.

The protein localises to the secreted. The protein resides in the extracellular space. The catalysed reaction is Release of an N-terminal tripeptide from a polypeptide.. In terms of biological role, secreted tripeptidyl-peptidase which degrades proteins at acidic pHs and is involved in virulence. The polypeptide is Tripeptidyl-peptidase SED2 (SED2) (Arthroderma otae (strain ATCC MYA-4605 / CBS 113480) (Microsporum canis)).